The chain runs to 183 residues: MAATLQFLVCLVVAICLLSGVTTTQPHAGQPMDSTSVGGGLQEPEAPEVMFELLWAGLELDVMGQLHIQDEELASTHPGRRLRLLLQHHVPSDLEGTEQWLQQLQDLRKGPPLSTWDFEHLLLTGLSCVYRLHAASEAEERGRWAQVFALLAQETLWDLCKGFCPQDRPPSLGSWASILDPFP.

The signal sequence occupies residues methionine 1–threonine 23.

This sequence belongs to the FAM180 family.

Its subcellular location is the secreted. The sequence is that of Protein FAM180B (FAM180B) from Homo sapiens (Human).